The following is a 610-amino-acid chain: Oxidoreductase ptaE (610 aa).

The N-terminal stretch at 1-20 (MFQSILFLAFYGRPVFGSAA) is a signal peptide. Plastocyanin-like domains are found at residues 67–181 (QIIS…HGPS) and 191–344 (PWLL…IVRY). Residues Asn-105, Asn-111, Asn-262, Asn-277, Asn-330, Asn-356, Asn-401, Asn-409, Asn-427, and Asn-602 are each glycosylated (N-linked (GlcNAc...) asparagine). One can recognise a Plastocyanin-like 3 domain in the interval 425 to 568 (YVNWSEPSVK…IAIQFLEQPS (144 aa)).

This sequence belongs to the multicopper oxidase family.

Its pathway is secondary metabolite biosynthesis. In terms of biological role, oxidoreductase; part of the gene cluster that mediates the biosynthesis of pestheic acid, a diphenyl ether which is a biosynthetic precursor of the unique chloropupukeananes. The biosynthesis initiates from condensation of acetate and malonate units catalyzed by the non-reducing PKS ptaA. As the ptaA protein is TE/CLC domain-deficient, hydrolysis and Claisen cyclization of the polyketide could be catalyzed by ptaB containing a beta-lactamase domain. The ptaB protein might hydrolyze the thioester bond between the ACP of ptaA and the intermediate to release atrochrysone carboxylic acid, which is spontaneously dehydrated to form endocrocin anthrone. Endocrocin anthrone is then converted to endocrocin, catalyzed by the anthrone oxygenase ptaC. Spontaneous decarboxylation of endocrocin occurs to generate emodin. An O-methyltransferase (ptaH or ptaI) could methylate emodin to form physcion. PtaJ could then catalyze the oxidative cleavage of physcion, and rotation of the intermediate could then afford desmethylisosulochrin. PtaF, a putative NADH-dependent oxidoreductase, might also participate in the oxidative cleavage step. Desmethylisosulochrin is then transformed by another O-methyltransferase (ptaH or ptaI) to form isosulochrin. Chlorination of isosulochrin by ptaM in the cyclohexadienone B ring then produces chloroisosulochrin. PtaE is responsible for the oxidative coupling reactions of both benzophenones isosulouchrin and chloroisosulochrin to RES-1214-1 and pestheic acid respectively, regardless of chlorination. This Pestalotiopsis fici (strain W106-1 / CGMCC3.15140) protein is Oxidoreductase ptaE.